Reading from the N-terminus, the 243-residue chain is Uroporphyrinogen-III C-methyltransferase (243 aa).

S-adenosyl-L-homocysteine contacts are provided by residues P12, 88-90, 118-119, M166, and A195; these read SGD and ST.

It belongs to the precorrin methyltransferase family.

It carries out the reaction uroporphyrinogen III + 2 S-adenosyl-L-methionine = precorrin-2 + 2 S-adenosyl-L-homocysteine + H(+). Its pathway is cofactor biosynthesis; adenosylcobalamin biosynthesis; precorrin-2 from uroporphyrinogen III: step 1/1. It participates in porphyrin-containing compound metabolism; siroheme biosynthesis; precorrin-2 from uroporphyrinogen III: step 1/1. In terms of biological role, catalyzes the two successive C-2 and C-7 methylation reactions involved in the conversion of uroporphyrinogen III to precorrin-2 via the intermediate formation of precorrin-1. It is a step in the biosynthesis of both cobalamin (vitamin B12) and siroheme. This is Uroporphyrinogen-III C-methyltransferase from Synechococcus elongatus (strain ATCC 33912 / PCC 7942 / FACHB-805) (Anacystis nidulans R2).